Reading from the N-terminus, the 78-residue chain is Translation initiation factor IF-1, plastid (78 aa).

The S1-like domain maps to 1-72 (MKKQDLIDME…TKGRITYRLR (72 aa)).

This sequence belongs to the IF-1 family. Component of the 30S ribosomal translation pre-initiation complex which assembles on the 30S ribosome in the order IF-2 and IF-3, IF-1 and N-formylmethionyl-tRNA(fMet); mRNA recruitment can occur at any time during PIC assembly.

Its subcellular location is the plastid. One of the essential components for the initiation of protein synthesis. Stabilizes the binding of IF-2 and IF-3 on the 30S subunit to which N-formylmethionyl-tRNA(fMet) subsequently binds. Helps modulate mRNA selection, yielding the 30S pre-initiation complex (PIC). Upon addition of the 50S ribosomal subunit IF-1, IF-2 and IF-3 are released leaving the mature 70S translation initiation complex. This chain is Translation initiation factor IF-1, plastid, found in Aneura mirabilis (Parasitic liverwort).